The following is a 430-amino-acid chain: Adenylosuccinate synthetase (430 aa).

Residues 12–18 (GDEGKGK) and 40–42 (GHT) each bind GTP. Asp-13 (proton acceptor) is an active-site residue. Residues Asp-13 and Gly-40 each contribute to the Mg(2+) site. Residues 13–16 (DEGK), 38–41 (NAGH), Thr-130, Arg-144, Gln-224, Thr-239, and Arg-303 each bind IMP. His-41 functions as the Proton donor in the catalytic mechanism. A substrate-binding site is contributed by 299 to 305 (VNTGRKR). GTP-binding positions include Arg-305, 331–333 (KLD), and 413–415 (STS).

It belongs to the adenylosuccinate synthetase family. As to quaternary structure, homodimer. The cofactor is Mg(2+).

The protein resides in the cytoplasm. The enzyme catalyses IMP + L-aspartate + GTP = N(6)-(1,2-dicarboxyethyl)-AMP + GDP + phosphate + 2 H(+). Its pathway is purine metabolism; AMP biosynthesis via de novo pathway; AMP from IMP: step 1/2. Its function is as follows. Plays an important role in the de novo pathway of purine nucleotide biosynthesis. Catalyzes the first committed step in the biosynthesis of AMP from IMP. This is Adenylosuccinate synthetase from Rhodopseudomonas palustris (strain TIE-1).